Reading from the N-terminus, the 267-residue chain is Regulatory protein VirG (267 aa).

The Response regulatory domain maps to His-29–Leu-143. Asp-78 is subject to 4-aspartylphosphate. The ompR/PhoB-type DNA-binding region spans Arg-155–Ala-255.

Phosphorylated by wide host range (WHR) VirA protein.

It is found in the cytoplasm. VirG is required for the positive regulation of at least two vir loci encoded by the Ti plasmid of A.tumefaciens. The polypeptide is Regulatory protein VirG (virG) (Rhizobium radiobacter (Agrobacterium tumefaciens)).